The chain runs to 584 residues: Aspartate--tRNA(Asp/Asn) ligase (584 aa).

E173 is an L-aspartate binding site. Residues 197–200 form an aspartate region; that stretch reads QLFK. R219 contacts L-aspartate. ATP is bound by residues 219 to 221 and Q228; that span reads RDE. L-aspartate is bound at residue H446. Position 476 (E476) interacts with ATP. R483 provides a ligand contact to L-aspartate. 528–531 is a binding site for ATP; the sequence is GLDR.

The protein belongs to the class-II aminoacyl-tRNA synthetase family. Type 1 subfamily. Homodimer.

The protein resides in the cytoplasm. The enzyme catalyses tRNA(Asx) + L-aspartate + ATP = L-aspartyl-tRNA(Asx) + AMP + diphosphate. Functionally, aspartyl-tRNA synthetase with relaxed tRNA specificity since it is able to aspartylate not only its cognate tRNA(Asp) but also tRNA(Asn). Reaction proceeds in two steps: L-aspartate is first activated by ATP to form Asp-AMP and then transferred to the acceptor end of tRNA(Asp/Asn). In Sulfurovum sp. (strain NBC37-1), this protein is Aspartate--tRNA(Asp/Asn) ligase.